The chain runs to 158 residues: Phosphopantetheine adenylyltransferase (158 aa).

Residue Ser-10 participates in substrate binding. Residues 10-11 (SF) and His-18 each bind ATP. Positions 42, 74, and 88 each coordinate substrate. ATP contacts are provided by residues 89–91 (GLR), Glu-99, and 124–130 (YANISSS).

It belongs to the bacterial CoaD family. Homohexamer. Mg(2+) is required as a cofactor.

The protein localises to the cytoplasm. It catalyses the reaction (R)-4'-phosphopantetheine + ATP + H(+) = 3'-dephospho-CoA + diphosphate. The protein operates within cofactor biosynthesis; coenzyme A biosynthesis; CoA from (R)-pantothenate: step 4/5. Reversibly transfers an adenylyl group from ATP to 4'-phosphopantetheine, yielding dephospho-CoA (dPCoA) and pyrophosphate. The polypeptide is Phosphopantetheine adenylyltransferase (Vesicomyosocius okutanii subsp. Calyptogena okutanii (strain HA)).